The sequence spans 229 residues: Small ribosomal subunit protein uS3 (229 aa).

Residues 39-107 (VRQYLTEKLK…TAQINIAEIR (69 aa)) form the KH type-2 domain.

This sequence belongs to the universal ribosomal protein uS3 family. Part of the 30S ribosomal subunit. Forms a tight complex with proteins S10 and S14.

Functionally, binds the lower part of the 30S subunit head. Binds mRNA in the 70S ribosome, positioning it for translation. This Shewanella frigidimarina (strain NCIMB 400) protein is Small ribosomal subunit protein uS3.